The primary structure comprises 149 residues: VapC ribonuclease PF0355 (149 aa).

The region spanning 8 to 122 (TFDSLALIKM…ITDDSKRYEP (115 aa)) is the PINc domain. Mg(2+) is bound by residues aspartate 10 and aspartate 98.

This sequence belongs to the PINc/VapC protein family. Mg(2+) is required as a cofactor.

Toxic component of a type II toxin-antitoxin (TA) system. An RNase. In Pyrococcus furiosus (strain ATCC 43587 / DSM 3638 / JCM 8422 / Vc1), this protein is VapC ribonuclease PF0355.